Consider the following 969-residue polypeptide: Glycine dehydrogenase (decarboxylating) (969 aa).

Lysine 716 bears the N6-(pyridoxal phosphate)lysine mark.

The protein belongs to the GcvP family. As to quaternary structure, the glycine cleavage system is composed of four proteins: P, T, L and H. The cofactor is pyridoxal 5'-phosphate.

The enzyme catalyses N(6)-[(R)-lipoyl]-L-lysyl-[glycine-cleavage complex H protein] + glycine + H(+) = N(6)-[(R)-S(8)-aminomethyldihydrolipoyl]-L-lysyl-[glycine-cleavage complex H protein] + CO2. In terms of biological role, the glycine cleavage system catalyzes the degradation of glycine. The P protein binds the alpha-amino group of glycine through its pyridoxal phosphate cofactor; CO(2) is released and the remaining methylamine moiety is then transferred to the lipoamide cofactor of the H protein. The sequence is that of Glycine dehydrogenase (decarboxylating) from Shewanella woodyi (strain ATCC 51908 / MS32).